We begin with the raw amino-acid sequence, 123 residues long: MAKPSYVKFEVPKELAEKALQAVEIARDTGKIRKGTNETTKAVERGQAKLVIIAEDVDPEEIVAHLPPLCEEKEIPYIYVPSKKELGAAAGIEVAAASVAIIEPGKARDLVEEIAMKVRELMK.

It belongs to the eukaryotic ribosomal protein eL8 family. In terms of assembly, part of the 50S ribosomal subunit. Probably part of the RNase P complex.

The protein resides in the cytoplasm. In terms of biological role, multifunctional RNA-binding protein that recognizes the K-turn motif in ribosomal RNA, the RNA component of RNase P, box H/ACA, box C/D and box C'/D' sRNAs. This is Large ribosomal subunit protein eL8 from Pyrococcus abyssi (strain GE5 / Orsay).